Consider the following 80-residue polypeptide: Defensin-like protein 204 (80 aa).

The signal sequence occupies residues 1–29 (MAKTFSSICFTTLLLVVLFISTEIPKSEA). Disulfide bonds link cysteine 43/cysteine 64, cysteine 48/cysteine 73, and cysteine 52/cysteine 75.

It belongs to the DEFL family.

The protein localises to the secreted. This is Defensin-like protein 204 from Arabidopsis thaliana (Mouse-ear cress).